We begin with the raw amino-acid sequence, 905 residues long: V-type proton ATPase 116 kDa subunit a 1 (905 aa).

Over 1–424 (MGDYVTPGEE…DAYGIATYRE (424 aa)) the chain is Cytoplasmic. Residues 425–443 (INPAPYTMISFPFLFAVMF) traverse the membrane as a helical segment. Topologically, residues 444 to 445 (GD) are lumenal. Residues 446-462 (MGHGAIMLLAALFFILK) traverse the membrane as a helical segment. At 463–477 (EKQLEAARIKDEIFQ) the chain is on the cytoplasmic side. Residues 478–507 (TFFGGRYVIFLMGAFSIYTGFMYNDVFSKS) form a helical membrane-spanning segment. The Lumenal segment spans residues 508-572 (INTFGSSWQN…EGNKLSFLNS (65 aa)). Residues 573–592 (MKMKMSVLFGIAQMTFGVLL) traverse the membrane as a helical segment. The Cytoplasmic segment spans residues 593–610 (SYQNFIYFKSDLDIKYMF). The helical transmembrane segment at 611-631 (IPQMIFLSSIFIYLCIQILSK) threads the bilayer. The Lumenal portion of the chain corresponds to 632–699 (WLFFGAVGGT…YPGQATIEII (68 aa)). The chain crosses the membrane as a helical span at residues 700 to 719 (LVVLALVQVPIMLFAKPYFL). Topologically, residues 720-788 (YRRDKQQSRY…DVMVYQAIHT (69 aa)) are cytoplasmic. The chain crosses the membrane as a helical span at residues 789 to 813 (IEFVLGCVSHTASYLRLWALSLAHA). Residues 814 to 834 (QLSDVLWTMVFRNAFVLDGYT) lie on the Lumenal side of the membrane. The helical transmembrane segment at 835-873 (GAIATYILFFIFGSLSVFILVLMEGLSAFLHALRLHWVE) threads the bilayer. Residues 874 to 905 (FQSKFYGGLGYEFAPFSFEKILAEEREAEENL) lie on the Cytoplasmic side of the membrane.

It belongs to the V-ATPase 116 kDa subunit family. In terms of assembly, V-ATPase is a heteromultimeric enzyme made up of two complexes: the ATP-hydrolytic V1 complex and the proton translocation V0 complex. The V1 complex consists of three catalytic AB heterodimers that form a heterohexamer, three peripheral stalks each consisting of EG heterodimers, one central rotor including subunits D and F, and the regulatory subunits C and H. The proton translocation complex V0 consists of the proton transport subunit a, a ring of proteolipid subunits c9c'', rotary subunit d, subunits e and f, and the accessory subunits vah-19/Ac45 and vah-20/PRR. Interacts with V-type proton ATPase subunit C vha-11. In terms of tissue distribution, ubiquitous expression in embryos. Expressed in gonads, intestine, neurons in the head and motoneurons in the ventral cord of larvae and adults. Expressed in the vulvae and spermathecal uterine valves. Weakly expressed in the pharynx. Specifically expressed in the nervous system.

It localises to the membrane. Functionally, subunit of the V0 complex of vacuolar(H+)-ATPase (V-ATPase), a multisubunit enzyme composed of a peripheral complex (V1) that hydrolyzes ATP and a membrane integral complex (V0) that translocates protons. V-ATPase is responsible for acidifying and maintaining the pH of intracellular compartments and in some cell types, is targeted to the plasma membrane, where it is responsible for acidifying the extracellular environment. Required for assembly and activity of the vacuolar ATPase. Regulates the size of gut granules during embryonic development. In neurons, required for necrotic cell death by promoting intracellular acidification. Required for cell death induced by hypoxia. Required for acidification of synaptic vesicles and the release of neurotransmitters from adult neurons. This Caenorhabditis elegans protein is V-type proton ATPase 116 kDa subunit a 1.